The primary structure comprises 108 residues: uncharacterized protein (108 aa).

Thr-56 carries the phosphothreonine modification. The tract at residues 89–108 is disordered; the sequence is AQAKGTEQAEALKKGTSKWF.

The protein localises to the cytoplasm. This is an uncharacterized protein from Schizosaccharomyces pombe (strain 972 / ATCC 24843) (Fission yeast).